The following is a 169-amino-acid chain: MAQHQVNYASNAGLPVALTTVDKLVNWGRTNSLWVLTYGLACCAIEMMASGASRYDFDRFGVIFRASPRQSDVMIVAGTLTKKHAEFIRRLYDQMAEPKWVISMGSCANTGGMFNTYATVQGVDRVIPVDIYLPGCAPRPETLQYAVMLLQKKLRKRSIFQKQKPKRLV.

Residues Cys42, Cys43, Cys107, and Cys136 each coordinate [4Fe-4S] cluster.

The protein belongs to the complex I 20 kDa subunit family. In terms of assembly, NDH-1 is composed of 14 different subunits. Subunits NuoB, C, D, E, F, and G constitute the peripheral sector of the complex. Requires [4Fe-4S] cluster as cofactor.

The protein localises to the cell inner membrane. It carries out the reaction a quinone + NADH + 5 H(+)(in) = a quinol + NAD(+) + 4 H(+)(out). NDH-1 shuttles electrons from NADH, via FMN and iron-sulfur (Fe-S) centers, to quinones in the respiratory chain. The immediate electron acceptor for the enzyme in this species is believed to be ubiquinone. Couples the redox reaction to proton translocation (for every two electrons transferred, four hydrogen ions are translocated across the cytoplasmic membrane), and thus conserves the redox energy in a proton gradient. The polypeptide is NADH-quinone oxidoreductase subunit B (Nitratiruptor sp. (strain SB155-2)).